The primary structure comprises 309 residues: Probable manganese-dependent inorganic pyrophosphatase (309 aa).

Residues His9, Asp13, Asp15, Asp75, His97, and Asp149 each contribute to the Mn(2+) site.

This sequence belongs to the PPase class C family. Mn(2+) serves as cofactor.

It localises to the cytoplasm. The enzyme catalyses diphosphate + H2O = 2 phosphate + H(+). In Staphylococcus epidermidis (strain ATCC 35984 / DSM 28319 / BCRC 17069 / CCUG 31568 / BM 3577 / RP62A), this protein is Probable manganese-dependent inorganic pyrophosphatase.